The sequence spans 226 residues: Ornithine decarboxylase antizyme (226 aa).

Belongs to the ODC antizyme family. In terms of assembly, interacts with ODC and thereby sterically blocks ODC homodimerization.

Its function is as follows. Ornithine decarboxylase (ODC) antizyme protein that negatively regulates ODC activity and intracellular polyamine biosynthesis in response to increased intracellular polyamine levels. Binds to ODC monomers, inhibiting the assembly of the functional ODC homodimer, and targets the monomers for ubiquitin-independent proteolytic destruction by the 26S proteasome. The protein is Ornithine decarboxylase antizyme (spa1) of Schizosaccharomyces japonicus (Fission yeast).